The chain runs to 218 residues: Capsid protein (218 aa).

Residue Met-1 is modified to N-acetylmethionine; by host. The segment covering 1-10 has biased composition (low complexity); sequence MDKSESTSAG. Positions 1–29 are disordered; that stretch reads MDKSESTSAGRNRRRRLRRGSRSAPSSAD. A compositionally biased stretch (basic residues) spans 11–21; that stretch reads RNRRRRLRRGS.

Belongs to the cucumovirus capsid protein family.

It is found in the virion. Its function is as follows. Capsid protein. Probably binds RNA and plays a role in packaging. The sequence is that of Capsid protein from Cucumis sativus (Cucumber).